Reading from the N-terminus, the 338-residue chain is MTKTRILLSDSTDPWFNLAVEDTIFRSMPADQRVLFLWRNADTVVIGRAQNPWRECKTDRMEQDKVKLARRQTGGGAVFHDLGNTNFTFMAGKPEYDKEVSTKIVLAGLQKLGIHGVANGRNDLVLEDEQGIRKFSGSAYRETLDRGFHHGTLLLSADLNRLADYLNPDLKKLQAKGITSVKSRVINLNTVKADIEHQQVCEAIMQAYCEHYQQQVEPELISPQSFFDLPGFEQKFAQQSSWDWNFGQTPPFTHHMDERFSWGGVEVYLEVERGTIVQATIFSDMLDPYPMEQLALRLSGLTYNKTALEPCLAQLMQELPQYQLPLEEFQRWFIDQID.

One can recognise a BPL/LPL catalytic domain in the interval 29–216 (PADQRVLFLW…AYCEHYQQQV (188 aa)). Residues arginine 71, 76-79 (GAVF), and lysine 134 each bind ATP. Position 134 (lysine 134) interacts with (R)-lipoate.

It belongs to the LplA family. Monomer.

The protein resides in the cytoplasm. The catalysed reaction is L-lysyl-[lipoyl-carrier protein] + (R)-lipoate + ATP = N(6)-[(R)-lipoyl]-L-lysyl-[lipoyl-carrier protein] + AMP + diphosphate + H(+). Its pathway is protein modification; protein lipoylation via exogenous pathway; protein N(6)-(lipoyl)lysine from lipoate: step 1/2. It participates in protein modification; protein lipoylation via exogenous pathway; protein N(6)-(lipoyl)lysine from lipoate: step 2/2. Its function is as follows. Catalyzes both the ATP-dependent activation of exogenously supplied lipoate to lipoyl-AMP and the transfer of the activated lipoyl onto the lipoyl domains of lipoate-dependent enzymes. The sequence is that of Lipoate-protein ligase A from Vibrio cholerae serotype O1 (strain ATCC 39541 / Classical Ogawa 395 / O395).